Reading from the N-terminus, the 399-residue chain is uncharacterized protein (399 aa).

The disordered stretch occupies residues 375-399 (AAGGHRGSHGKSEQAATVRVVDDRR).

This sequence belongs to the mycobacterial PPE family.

This is an uncharacterized protein from Mycobacterium tuberculosis (strain CDC 1551 / Oshkosh).